Consider the following 131-residue polypeptide: MSRNMEVNAGSSGEIPSPIRNRFQKSGSQAVYEVTETKKSCVTRVDMPGCPESDLTYWVDANNVHFFADEPAMPEYENAGRKYGGSMIFNPEAYDVKKTKVKLINGVLWITVPKIPGKNASINVKERILHY.

The segment covering 1–11 has biased composition (polar residues); it reads MSRNMEVNAGS. The interval 1–20 is disordered; it reads MSRNMEVNAGSSGEIPSPIR. The sHSP domain occupies 22 to 131; that stretch reads RFQKSGSQAV…INVKERILHY (110 aa).

The protein belongs to the small heat shock protein (HSP20) family. As to quaternary structure, may form oligomeric structures.

It is found in the cytoplasm. The polypeptide is 14.7 kDa heat shock protein (HSP14.7) (Arabidopsis thaliana (Mouse-ear cress)).